The sequence spans 199 residues: Tumor protein p53-inducible nuclear protein 2 (199 aa).

Residues 26–41 carry the LIR motif; sequence VSEEDEVDGWLIIDLQ. Disordered regions lie at residues 41 to 69, 117 to 153, and 173 to 199; these read QDSY…LMDE, LESG…LHHA, and LQRA…ARES. A compositionally biased stretch (pro residues) spans 47–64; the sequence is PPDPRASPAPAGRPPPAP. A Phosphoserine modification is found at serine 136.

As to quaternary structure, interacts with VMP1, GABARAP, GABARAPL1, GABARAPL2, MAP1LC3A, MAP1LC3B, MAP1LC3C and THRA. Abundantly expressed in skeletal muscle and heart and expression is highly repressed in muscle from obese diabetic rats.

The protein resides in the cytoplasm. The protein localises to the cytosol. Its subcellular location is the nucleus. It is found in the PML body. It localises to the cytoplasmic vesicle. The protein resides in the autophagosome. Its function is as follows. Dual regulator of transcription and autophagy. Positively regulates autophagy and is required for autophagosome formation and processing. May act as a scaffold protein that recruits MAP1LC3A, GABARAP and GABARAPL2 and brings them to the autophagosome membrane by interacting with VMP1 where, in cooperation with the BECN1-PI3-kinase class III complex, they trigger autophagosome development. Acts as a transcriptional activator of THRA. This Rattus norvegicus (Rat) protein is Tumor protein p53-inducible nuclear protein 2 (Tp53inp2).